Reading from the N-terminus, the 353-residue chain is Probable dual-specificity RNA methyltransferase RlmN (353 aa).

The Proton acceptor role is filled by Glu-90. Residues Tyr-96–Asp-326 enclose the Radical SAM core domain. A disulfide bond links Cys-103 and Cys-331. Residues Cys-110, Cys-114, and Cys-117 each contribute to the [4Fe-4S] cluster site. S-adenosyl-L-methionine contacts are provided by residues Gly-157–Glu-158, Ser-189, Ser-212–His-214, and Asn-288. Cys-331 functions as the S-methylcysteine intermediate in the catalytic mechanism.

This sequence belongs to the radical SAM superfamily. RlmN family. Requires [4Fe-4S] cluster as cofactor.

It is found in the cytoplasm. The enzyme catalyses adenosine(2503) in 23S rRNA + 2 reduced [2Fe-2S]-[ferredoxin] + 2 S-adenosyl-L-methionine = 2-methyladenosine(2503) in 23S rRNA + 5'-deoxyadenosine + L-methionine + 2 oxidized [2Fe-2S]-[ferredoxin] + S-adenosyl-L-homocysteine. It catalyses the reaction adenosine(37) in tRNA + 2 reduced [2Fe-2S]-[ferredoxin] + 2 S-adenosyl-L-methionine = 2-methyladenosine(37) in tRNA + 5'-deoxyadenosine + L-methionine + 2 oxidized [2Fe-2S]-[ferredoxin] + S-adenosyl-L-homocysteine. Functionally, specifically methylates position 2 of adenine 2503 in 23S rRNA and position 2 of adenine 37 in tRNAs. The chain is Probable dual-specificity RNA methyltransferase RlmN from Clostridium beijerinckii (strain ATCC 51743 / NCIMB 8052) (Clostridium acetobutylicum).